The primary structure comprises 383 residues: Cytochrome b (383 aa).

The next 4 helical transmembrane spans lie at 35–55 (FGSILGIFLMIQIISGFILSM), 79–100 (WLFRLIHMNGASFYFLMMYIHI), 115–135 (WGIGIMILLMSMAAAFMGYVL), and 180–200 (FFSLHFILPLLILFMVILHLF). Residues His-85 and His-99 each coordinate heme b. His-184 and His-198 together coordinate heme b. His-203 lines the a ubiquinone pocket. The next 4 helical transmembrane spans lie at 228-248 (IKDLLGFYIILFIFMFINFQF), 290-310 (LGGVIGLVMSILILYIMIFYN), 321-341 (LNKIYYWMFINNFILLTWLGK), and 348-368 (FTNINMLFTTTYFLYFFLNFY).

Belongs to the cytochrome b family. As to quaternary structure, the main subunits of complex b-c1 are: cytochrome b, cytochrome c1 and the Rieske protein. Requires heme b as cofactor.

The protein localises to the mitochondrion inner membrane. Functionally, component of the ubiquinol-cytochrome c reductase complex (complex III or cytochrome b-c1 complex) that is part of the mitochondrial respiratory chain. The b-c1 complex mediates electron transfer from ubiquinol to cytochrome c. Contributes to the generation of a proton gradient across the mitochondrial membrane that is then used for ATP synthesis. This Apis mellifera ligustica (Common honeybee) protein is Cytochrome b (MT-CYB).